We begin with the raw amino-acid sequence, 336 residues long: CENP-A histone chaperone scm3 (336 aa).

The interval 243–269 (RRRNPLLSSPKTPLRRSFSKSKVRNSN) is disordered. Residues 255 to 269 (PLRRSFSKSKVRNSN) are compositionally biased toward basic residues.

It is found in the cytoplasm. Its subcellular location is the nucleus. Functionally, centromeric protein that plays a central role in the incorporation and maintenance of histone H3-like variant CENPA at centromeres. In Schizosaccharomyces pombe (strain 972 / ATCC 24843) (Fission yeast), this protein is CENP-A histone chaperone scm3.